The primary structure comprises 1295 residues: Phosphoribosylformylglycinamidine synthase (1295 aa).

The tract at residues 305–327 (WPGAATGSGGEIRDEGATGRGAK) is disordered. ATP contacts are provided by residues 307–318 (GAATGSGGEIRD), 386–388 (TGY), and A678. Mg(2+)-binding residues include D679, E718, N722, and D884. Position 886 (S886) interacts with ATP. One can recognise a Glutamine amidotransferase type-1 domain in the interval 1042-1295 (VAVLREQGVN…IFRNARKQLG (254 aa)). C1135 functions as the Nucleophile in the catalytic mechanism. Active-site residues include H1260 and E1262.

In the N-terminal section; belongs to the FGAMS family. Monomer.

It localises to the cytoplasm. The enzyme catalyses N(2)-formyl-N(1)-(5-phospho-beta-D-ribosyl)glycinamide + L-glutamine + ATP + H2O = 2-formamido-N(1)-(5-O-phospho-beta-D-ribosyl)acetamidine + L-glutamate + ADP + phosphate + H(+). The protein operates within purine metabolism; IMP biosynthesis via de novo pathway; 5-amino-1-(5-phospho-D-ribosyl)imidazole from N(2)-formyl-N(1)-(5-phospho-D-ribosyl)glycinamide: step 1/2. Phosphoribosylformylglycinamidine synthase involved in the purines biosynthetic pathway. Catalyzes the ATP-dependent conversion of formylglycinamide ribonucleotide (FGAR) and glutamine to yield formylglycinamidine ribonucleotide (FGAM) and glutamate. The sequence is that of Phosphoribosylformylglycinamidine synthase from Salmonella paratyphi A (strain ATCC 9150 / SARB42).